Reading from the N-terminus, the 82-residue chain is Small ribosomal subunit protein bS16 (82 aa).

It belongs to the bacterial ribosomal protein bS16 family.

The sequence is that of Small ribosomal subunit protein bS16 from Clostridium botulinum (strain Okra / Type B1).